Reading from the N-terminus, the 190-residue chain is Holliday junction branch migration complex subunit RuvA (190 aa).

Residues 1–65 (MIGTLSGTVE…DGVSQLYGFA (65 aa)) form a domain I region. Residues 66–137 (NREEQNCMRM…LTPQVQKFEL (72 aa)) form a domain II region. A flexible linker region spans residues 137–141 (LNRFA). Positions 142–190 (ATTRTDSEAVAALLSLGYERTAALGALQKVGVCDSTEDAVRRALLELSK) are domain III.

It belongs to the RuvA family. As to quaternary structure, homotetramer. Forms an RuvA(8)-RuvB(12)-Holliday junction (HJ) complex. HJ DNA is sandwiched between 2 RuvA tetramers; dsDNA enters through RuvA and exits via RuvB. An RuvB hexamer assembles on each DNA strand where it exits the tetramer. Each RuvB hexamer is contacted by two RuvA subunits (via domain III) on 2 adjacent RuvB subunits; this complex drives branch migration. In the full resolvosome a probable DNA-RuvA(4)-RuvB(12)-RuvC(2) complex forms which resolves the HJ.

It localises to the cytoplasm. The RuvA-RuvB-RuvC complex processes Holliday junction (HJ) DNA during genetic recombination and DNA repair, while the RuvA-RuvB complex plays an important role in the rescue of blocked DNA replication forks via replication fork reversal (RFR). RuvA specifically binds to HJ cruciform DNA, conferring on it an open structure. The RuvB hexamer acts as an ATP-dependent pump, pulling dsDNA into and through the RuvAB complex. HJ branch migration allows RuvC to scan DNA until it finds its consensus sequence, where it cleaves and resolves the cruciform DNA. The chain is Holliday junction branch migration complex subunit RuvA from Anaplasma marginale (strain Florida).